Here is a 61-residue protein sequence, read N- to C-terminus: Tryptophyllin-T1 (61 aa).

The signal sequence occupies residues 1–22; it reads MDFLKKSLFLVLFLGLVSISLC. A propeptide spanning residues 23–53 is cleaved from the precursor; it reads DEEKRQDDDEASEREEKKEIHEEGNQEERRD. The disordered stretch occupies residues 25 to 61; it reads EKRQDDDEASEREEKKEIHEEGNQEERRDRPPSWIPK. Over residues 36 to 55 the composition is skewed to basic and acidic residues; it reads REEKKEIHEEGNQEERRDRP. P56 carries the post-translational modification 4-hydroxyproline; partial.

The protein belongs to the frog skin active peptide (FSAP) family. Tryptophillin subfamily. In terms of tissue distribution, expressed by the skin glands.

Its subcellular location is the secreted. This chain is Tryptophyllin-T1, found in Pithecopus azureus (Orange-legged monkey tree frog).